Consider the following 223-residue polypeptide: uncharacterized protein (223 aa).

This is an uncharacterized protein from Mycoplasma pneumoniae (strain ATCC 29342 / M129 / Subtype 1) (Mycoplasmoides pneumoniae).